The primary structure comprises 231 residues: Ferredoxin-type protein NapG (231 aa).

The tat-type signal signal peptide spans 1 to 41; that stretch reads MSRSAKPQNGRRRFLRDVVRTAGGLAAVGVALGLQQQTARA. 4Fe-4S ferredoxin-type domains lie at 50 to 81, 89 to 121, 130 to 166, and 177 to 208; these read GAIN…LATL, TPYF…REIE, LAVL…LELE, and FLPT…VLPL. Positions 61, 64, 67, 71, 99, 102, 107, 111, 139, 147, 150, 154, 186, 189, 192, and 196 each coordinate [4Fe-4S] cluster.

[4Fe-4S] cluster is required as a cofactor. Exported by the Tat system. The position of the signal peptide cleavage has not been experimentally proven.

The protein resides in the periplasm. Functionally, required for electron transfer from ubiquinol, via NapC, to the periplasmic nitrate reductase NapAB complex. The protein is Ferredoxin-type protein NapG (napG) of Escherichia coli (strain K12).